A 337-amino-acid chain; its full sequence is Phospholipase A1 1 (337 aa).

The signal sequence occupies residues 1–21 (MNFKYSILFICFVKVLDNCYA). The propeptide occupies 22 to 35 (ADDLTTLRNGTLDR). A disulfide bridge links Cys41 with Cys124. The active-site Nucleophile is the Ser174. Asp202 serves as the catalytic Charge relay system. 2 disulfides stabilise this stretch: Cys213-Cys218 and Cys256-Cys261. The active-site Charge relay system is His263. 3 cysteine pairs are disulfide-bonded: Cys278–Cys305, Cys279–Cys330, and Cys298–Cys303.

The protein belongs to the AB hydrolase superfamily. Lipase family. Expressed by the venom gland.

It localises to the secreted. It catalyses the reaction a 1,2-diacyl-sn-glycero-3-phosphocholine + H2O = a 2-acyl-sn-glycero-3-phosphocholine + a fatty acid + H(+). In terms of biological role, catalyzes the hydrolysis of phosphatidylcholine with phospholipase A1 activity. May act as an allergen and induce hemolytic activity. This Polistes dominula (European paper wasp) protein is Phospholipase A1 1.